Here is a 149-residue protein sequence, read N- to C-terminus: NPC intracellular cholesterol transporter 2 (149 aa).

A signal peptide spans 1–19; sequence MHFLAAAFLLLTLSASALA. Cystine bridges form between C27–C140, C42–C47, and C93–C99. The N-linked (GlcNAc...) asparagine glycan is linked to N58. K116 is modified (N6-acetyllysine).

Belongs to the NPC2 family. As to quaternary structure, interacts with NPC1 (via the second lumenal domain) in a cholestrol-dependent manner. Interacts with NUS1/NgBR, the interaction stabilizes NCP2 and regulates cholesterol trafficking. Interacts with DHDDS. Interacts with NEDD4L (via C2 domain). Interacts with NPC1L1. In terms of processing, N-glycosylated. Found in the epididymal fluid as a 19 kDa glycoprotein that is processed during its passage through the epididymis into a 16 kDa protein. Found in the fluid from the distal caput to cauda epididymis, not detected in the rete testis and the proximal and middle caput epididymal fluids (at protein level).

It localises to the secreted. The protein resides in the endoplasmic reticulum. It is found in the lysosome. It carries out the reaction cholesterol(in) = cholesterol(out). Its function is as follows. Intracellular cholesterol transporter which acts in concert with NPC1 and plays an important role in the egress of cholesterol from the lysosomal compartment. Unesterified cholesterol that has been released from LDLs in the lumen of the late endosomes/lysosomes is transferred by NPC2 to the cholesterol-binding pocket in the N-terminal domain of NPC1. May bind and mobilize cholesterol that is associated with membranes. NPC2 binds cholesterol with a 1:1 stoichiometry. Can bind a variety of sterols, including lathosterol, desmosterol and the plant sterols stigmasterol and beta-sitosterol. The secreted form of NCP2 regulates biliary cholesterol secretion via stimulation of ABCG5/ABCG8-mediated cholesterol transport. The sequence is that of NPC intracellular cholesterol transporter 2 from Sus scrofa (Pig).